Here is a 657-residue protein sequence, read N- to C-terminus: Receptor-type tyrosine-protein phosphatase R (657 aa).

The signal sequence occupies residues 1–21 (MRRAVCFPALCLLLNLHAAGC). Over 22 to 227 (FSGNNDHFLA…EADKIWSKEG (206 aa)) the chain is Extracellular. Serine 23 carries O-linked (Xyl...) (chondroitin sulfate) serine glycosylation. Asparagine 129 is a glycosylation site (N-linked (GlcNAc...) asparagine). A helical membrane pass occupies residues 228–248 (FYAVVIFLSIFVIIVTCLMIL). Topologically, residues 249–657 (YRLKERFQLS…ESRLSAETVQ (409 aa)) are cytoplasmic. Residue serine 272 is modified to Phosphoserine. Serine 339 is subject to Phosphoserine; by PKA. Residues 393-647 (LQSEFMEIPM…EFVHHALCLY (255 aa)) form the Tyrosine-protein phosphatase domain. Substrate-binding positions include aspartate 554, 588–594 (CSAGIGR), and glutamine 632. Residue cysteine 588 is the Phosphocysteine intermediate of the active site.

It belongs to the protein-tyrosine phosphatase family. Receptor class 7 subfamily. In terms of assembly, interacts with MAPKs. As to expression, detected in cerebrospinal fluid (at protein level). Expressed in brain, placenta, small intestine, stomach, uterus and weakly in the prostate. Isoform alpha has been observed only in the brain. Isoform gamma is expressed in brain, placenta and uterus. Isoform delta is expressed in brain, kidney, placenta, prostate, small intestine and uterus.

The protein resides in the secreted. Its subcellular location is the cell membrane. It is found in the cytoplasm. The protein localises to the perinuclear region. It catalyses the reaction O-phospho-L-tyrosyl-[protein] + H2O = L-tyrosyl-[protein] + phosphate. Its function is as follows. Sequesters mitogen-activated protein kinases (MAPKs) such as MAPK1, MAPK3 and MAPK14 in the cytoplasm in an inactive form. The MAPKs bind to a dephosphorylated kinase interacting motif, phosphorylation of which by the protein kinase A complex releases the MAPKs for activation and translocation into the nucleus. This chain is Receptor-type tyrosine-protein phosphatase R (PTPRR), found in Homo sapiens (Human).